The chain runs to 548 residues: Tripartite motif-containing protein 55 (548 aa).

The RING-type zinc-finger motif lies at 10-66 (FSKEQQTMDNLEKQLICPICLEMFTKPVVILPCQHNLCRKCASDIFQASNPYLPTRG). The segment at 103 to 145 (NIIDIYKQESTRPEKKSDQPMCEEHEEERINIYCLNCEVPTCS) adopts a B box-type zinc-finger fold. Positions 124, 127, 147, and 153 each coordinate Zn(2+). The stretch at 168–248 (QKSELSDGIA…EKLEHVRALI (81 aa)) forms a coiled coil. One can recognise a COS domain in the interval 269–327 (MDEPEMAVFLQNAKTLLKKISEASKAFQMEKIEHGYENMNHFTVNLNREEKIIREIDFY). The tract at residues 326–532 (FYREDEDEEE…PASGSGADSE (207 aa)) is disordered. 2 stretches are compositionally biased toward acidic residues: residues 328 to 339 (REDEDEEEEEGG) and 347 to 360 (GEVG…EEVE). 2 stretches are compositionally biased toward low complexity: residues 484–496 (VAAA…AAVS) and 512–531 (EAPP…GADS).

Homooligomer and heterooligomer. Interacts with titin/TTN. Interacts with myosins. Interacts with SQSTM1 and NBR1. Isoform 4 may not able to interact with isoform 1, isoform 2 and isoform 3. Probably interacts with TRIM63 and TRIM54. In terms of processing, targeted for degradation through the proteasomal and lysosomal pathways in the presence of SUMO3. Highly expressed in muscle. Low-level expression in liver.

It localises to the nucleus. It is found in the cytoplasm. It carries out the reaction S-ubiquitinyl-[E2 ubiquitin-conjugating enzyme]-L-cysteine + [acceptor protein]-L-lysine = [E2 ubiquitin-conjugating enzyme]-L-cysteine + N(6)-ubiquitinyl-[acceptor protein]-L-lysine.. E3 ubiquitin ligase that plays an important role in regulating cardiac development and contractility, muscle growth, metabolism, and fiber-type differentiation. Acts as a critical factor that regulates cardiomyocyte size during development in concert with TRIM63 by regulating E2F1-mediated gene expression. Plays a role in apoptosis induction in cardiomyocytes by promoting ubiquitination of the DUSP1 phosphatase. Promotes non-canonical NF-kappa-B signaling and B-cell-mediated immune responses by mediating NFKB2 'Lys-48'-linked ubiquitination and processing. In turn, NFKB2 is further processed by valosin-containing protein/VCP, an ATPase that mediates ubiquitin-dependent protein degradation by the proteasome. May play a role in preventing macrophages from producing inflammatory factors and migrating by downregulating the level of nuclear NF-kappa-B subunit RELA. Also modifies PPARG via polyubiquitination and accelerates PPARG proteasomal degradation to inhibit its activity. In Homo sapiens (Human), this protein is Tripartite motif-containing protein 55 (TRIM55).